The primary structure comprises 191 residues: Ion-translocating oxidoreductase complex subunit B (191 aa).

Residues methionine 1–serine 26 are hydrophobic. In terms of domain architecture, 4Fe-4S spans glutamate 32–valine 91. Residues cysteine 49, cysteine 52, cysteine 57, cysteine 74, cysteine 116, cysteine 119, cysteine 122, cysteine 126, cysteine 146, cysteine 149, cysteine 152, and cysteine 156 each contribute to the [4Fe-4S] cluster site. 4Fe-4S ferredoxin-type domains follow at residues lysine 107–arginine 136 and alanine 137–valine 166.

It belongs to the 4Fe4S bacterial-type ferredoxin family. RnfB subfamily. In terms of assembly, the complex is composed of six subunits: RnfA, RnfB, RnfC, RnfD, RnfE and RnfG. [4Fe-4S] cluster is required as a cofactor.

Its subcellular location is the cell inner membrane. Its function is as follows. Part of a membrane-bound complex that couples electron transfer with translocation of ions across the membrane. In Erwinia tasmaniensis (strain DSM 17950 / CFBP 7177 / CIP 109463 / NCPPB 4357 / Et1/99), this protein is Ion-translocating oxidoreductase complex subunit B.